Here is a 292-residue protein sequence, read N- to C-terminus: Proteasome subunit beta 2 (292 aa).

Residues M1–G59 constitute a propeptide, removed in mature form; by autocatalysis. Residue T60 is the Nucleophile of the active site.

The protein belongs to the peptidase T1B family. In terms of assembly, the 20S proteasome core is composed of 14 alpha and 14 beta subunits that assemble into four stacked heptameric rings, resulting in a barrel-shaped structure. The two inner rings, each composed of seven catalytic beta subunits, are sandwiched by two outer rings, each composed of seven alpha subunits. All four combinations of alpha- and beta-subunits (beta2-alpha1, beta2-alpha2, beta1-alpha2 and beta1-alpha1) yield fully assembled and proteolytically active proteasomes. The catalytic chamber with the active sites is on the inside of the barrel. Has probably a gated structure, the ends of the cylinder being occluded by the N-termini of the alpha-subunits. Is likely capped by the proteasome-associated ATPase, ARC.

Its subcellular location is the cytoplasm. The catalysed reaction is Cleavage of peptide bonds with very broad specificity.. It functions in the pathway protein degradation; proteasomal Pup-dependent pathway. With respect to regulation, the formation of the proteasomal ATPase ARC-20S proteasome complex, likely via the docking of the C-termini of ARC into the intersubunit pockets in the alpha-rings, may trigger opening of the gate for substrate entry. Interconversion between the open-gate and close-gate conformations leads to a dynamic regulation of the 20S proteasome proteolysis activity. Its function is as follows. Component of the proteasome core, a large protease complex with broad specificity involved in protein degradation. The R.erythropolis proteasomes are able to cleave oligopeptides after Tyr, Phe and Leu, very poorly after Arg but not after Glu. Thus, displays chymotrypsin-like activity, low trypsin-like activity but no caspase-like activity. The chain is Proteasome subunit beta 2 from Rhodococcus erythropolis (Arthrobacter picolinophilus).